The following is a 278-amino-acid chain: MMALRKTKPTSPGRRAVIKSVNSFIYKGKPFAALTEKKKKNAGRNNSGRITVRHIGGGHKQHYRIVDFCRNKDDIPAKVERIEYDPNRSAYIALLCYADGERRYIIAAKDIEVGSYLVSGSSSPIKMGNAMPIRNIPVGSVIHCIELRPGKGAQLARSAGSSAQLMAKEGDYSQIRLRSGEIRKIHISCRATIGEVSNSEHNLQSIGKAGAIRWRGVRPTVRGVAMNPIDHPHGGGEGKTAAGRHPVSPWGTPSKGSRTRKNKRTSNMIVRSRYSKKG.

The interval 226–278 (MNPIDHPHGGGEGKTAAGRHPVSPWGTPSKGSRTRKNKRTSNMIVRSRYSKKG) is disordered.

Belongs to the universal ribosomal protein uL2 family. In terms of assembly, part of the 50S ribosomal subunit. Forms a bridge to the 30S subunit in the 70S ribosome.

Its function is as follows. One of the primary rRNA binding proteins. Required for association of the 30S and 50S subunits to form the 70S ribosome, for tRNA binding and peptide bond formation. It has been suggested to have peptidyltransferase activity; this is somewhat controversial. Makes several contacts with the 16S rRNA in the 70S ribosome. This Nitrosomonas europaea (strain ATCC 19718 / CIP 103999 / KCTC 2705 / NBRC 14298) protein is Large ribosomal subunit protein uL2.